The sequence spans 223 residues: uncharacterized protein (223 aa).

The next 2 helical transmembrane spans lie at 1–21 (MLIIGLCVVSMLLLSSNTFYL) and 45–65 (ILIGFVLALIGFIFCSGTSLI).

Its subcellular location is the cell membrane. This is an uncharacterized protein from Haemophilus influenzae (strain ATCC 51907 / DSM 11121 / KW20 / Rd).